A 240-amino-acid polypeptide reads, in one-letter code: MGKRLISQNRGRGTPKYRSPTHKRKGAVKYRSYDEMEKDGKILGTVIDILHDPGRSAPVAKVKFANDEERLVLIPEGIQVGEEIECGISAEIKPGNVLPLGEIPEGIPVYNIETIPGDGGKLVRSGGCYAHVISHDVGKTIVRLPSGFSKVLNPACRATVGVVAGGGRKEKPFVKAGKKYHSLSAKAVAWPKVRGVAMNAVDHPYGGGRHQHIGKPSSVSRHTSPGRKVGHIASRRTGKR.

The span at Met-1–Gly-11 shows a compositional bias: polar residues. 2 disordered regions span residues Met-1–Lys-25 and Gly-207–Arg-240. Composition is skewed to basic residues over residues Gly-13–Lys-25 and Ser-224–Arg-240.

The protein belongs to the universal ribosomal protein uL2 family. Part of the 50S ribosomal subunit. Forms a bridge to the 30S subunit in the 70S ribosome.

One of the primary rRNA binding proteins. Required for association of the 30S and 50S subunits to form the 70S ribosome, for tRNA binding and peptide bond formation. It has been suggested to have peptidyltransferase activity; this is somewhat controversial. Makes several contacts with the 16S rRNA in the 70S ribosome. This is Large ribosomal subunit protein uL2 from Methanococcus maripaludis (strain DSM 14266 / JCM 13030 / NBRC 101832 / S2 / LL).